The following is a 137-amino-acid chain: Small integral membrane protein 9 (137 aa).

An N-terminal signal peptide occupies residues methionine 1–threonine 23. Residues alanine 24–serine 84 are Extracellular-facing. The helical transmembrane segment at isoleucine 85–valine 105 threads the bilayer. Topologically, residues asparagine 106–glycine 137 are cytoplasmic.

The protein localises to the cell membrane. The protein is Small integral membrane protein 9 (Smim9) of Mus musculus (Mouse).